The sequence spans 367 residues: GDSL esterase/lipase At4g28780 (367 aa).

Residues 1–28 (MSTFLLTWIIMTVALSVTLFLMPQQTNA) form the signal peptide. Residue Ser38 is the Nucleophile of the active site. An N-linked (GlcNAc...) asparagine glycan is attached at Asn119. Active-site residues include Asp328 and His331. An N-linked (GlcNAc...) asparagine glycan is attached at Asn356.

Belongs to the 'GDSL' lipolytic enzyme family.

The protein localises to the secreted. In Arabidopsis thaliana (Mouse-ear cress), this protein is GDSL esterase/lipase At4g28780.